Consider the following 447-residue polypeptide: Phosphoglucosamine mutase (447 aa).

Ser-102 acts as the Phosphoserine intermediate in catalysis. Residues Ser-102, Asp-241, Asp-243, and Asp-245 each contribute to the Mg(2+) site. Ser-102 carries the phosphoserine modification.

It belongs to the phosphohexose mutase family. Mg(2+) is required as a cofactor. In terms of processing, activated by phosphorylation.

The catalysed reaction is alpha-D-glucosamine 1-phosphate = D-glucosamine 6-phosphate. In terms of biological role, catalyzes the conversion of glucosamine-6-phosphate to glucosamine-1-phosphate. This Pseudomonas syringae pv. tomato (strain ATCC BAA-871 / DC3000) protein is Phosphoglucosamine mutase.